The following is a 65-amino-acid chain: Ferredoxin-like protein in vnf region (65 aa).

4Fe-4S ferredoxin-type domains follow at residues 2-29 and 30-65; these read AMAI…VLQG and GIYV…PLDD. The [4Fe-4S] cluster site is built by cysteine 10, cysteine 13, cysteine 16, cysteine 20, cysteine 39, cysteine 42, cysteine 50, and cysteine 54.

It depends on [4Fe-4S] cluster as a cofactor.

The polypeptide is Ferredoxin-like protein in vnf region (Azotobacter chroococcum mcd 1).